The following is a 399-amino-acid chain: Centrosomal protein 43 (399 aa).

The 33-residue stretch at 70–102 (DGRLVASLVAEFLQFFNLDFTLAVFQPETSTLQ) folds into the LisH domain. Disordered regions lie at residues 139–218 (EKGP…SSLH) and 232–308 (NRTL…SESK). Threonine 143 is modified (phosphothreonine). 3 positions are modified to phosphoserine: serine 152, serine 156, and serine 160. Positions 163–172 (GKTSAQTTPS) are enriched in polar residues. At threonine 170 the chain carries Phosphothreonine. A compositionally biased stretch (basic residues) spans 175–186 (PRYKGQGKKKTS). The residue at position 202 (serine 202) is a Phosphoserine. The segment covering 205–218 (SVSLSEPKSKSSLH) has biased composition (low complexity). Position 234 is a phosphothreonine (threonine 234). Acidic residues predominate over residues 245–256 (PDEDDMEGDSFF). A compositionally biased stretch (basic and acidic residues) spans 259–275 (PIPKPEKTYGLRKEPRK). Positions 286–302 (APPLKSGLSSLAGAPSL) are enriched in low complexity. Serine 301 and serine 326 each carry phosphoserine. The segment at 331–353 (TGEDDDYVDDFNSTSHRSEKSEI) is disordered. Residue tyrosine 337 is modified to Phosphotyrosine.

It belongs to the CEP43 family. In terms of assembly, homodimer. Part of a ternary complex that contains CEP350, CEP43 and MAPRE1. Interacts directly with CEP350 and MAPRE1. Interacts with CEP19. Interacts (via N-terminus) with CEP350 (via C-terminus). In terms of tissue distribution, ubiquitous. Highly expressed in heart, liver, muscle, kidney, intestine, colon, adrenal gland, prostate, testis, and pancreas.

The protein localises to the cytoplasm. It is found in the cytoskeleton. The protein resides in the microtubule organizing center. Its subcellular location is the centrosome. It localises to the centriole. The protein localises to the cilium basal body. Its function is as follows. Required for anchoring microtubules to the centrosomes. Required for ciliation. In Homo sapiens (Human), this protein is Centrosomal protein 43.